A 313-amino-acid polypeptide reads, in one-letter code: MASLADRVRGNGRIAAGLLFNLLVSICIVFLNKWIYVHHGFPNMSLTLVHFVVTWLGLYICQKLNIFAPKSLPLSKLLLLALSFCGFVVFTNLSLQNNTIGTYQLAKAMTTPVIIAIQTFWYQKRFSVRIQLTLIPITVGVILNSYYDVKFHSLGMVFAALGVVVTSLYQVWVGAKQHELQVNSMQLLYYQAPMSSAMLLVAVPFFEPVFAEGGIFGPWSVSALLMVLLSGIIAFMVNLSIYWIIGNTSPVTYNMFGHFKFCITLCGGYILFKDPLSVNQGLGILCTLFGILTYTHFKLSEQEGSKSKLVQRP.

Transmembrane regions (helical) follow at residues 17 to 37 (GLLF…WIYV), 40 to 60 (GFPN…GLYI), 71 to 91 (SLPL…VVFT), 126 to 146 (FSVR…LNSY), 154 to 174 (LGMV…VWVG), 187 to 206 (LLYY…VPFF), 225 to 245 (LMVL…YWII), 252 to 272 (TYNM…YILF), and 275 to 295 (PLSV…LTYT).

It belongs to the TPT transporter family. SLC35E subfamily.

It localises to the membrane. Its function is as follows. Putative transporter. This chain is Solute carrier family 35 member E3 (Slc35e3), found in Mus musculus (Mouse).